The primary structure comprises 152 residues: UPF0266 membrane protein PM0830 (152 aa).

3 helical membrane-spanning segments follow: residues 1–21 (MMIINVLLCLGIFCFLLYAFY), 45–65 (KDALIFSLLIGIIIYQTYTNL), and 66–86 (SSATLYLLTALILLSVYAAFI).

The protein belongs to the UPF0266 family.

It is found in the cell inner membrane. This chain is UPF0266 membrane protein PM0830, found in Pasteurella multocida (strain Pm70).